The sequence spans 273 residues: Ribosomal RNA small subunit methyltransferase A (273 aa).

6 residues coordinate S-adenosyl-L-methionine: Asn18, Leu20, Gly45, Glu66, Asp91, and Asn113.

It belongs to the class I-like SAM-binding methyltransferase superfamily. rRNA adenine N(6)-methyltransferase family. RsmA subfamily.

Its subcellular location is the cytoplasm. It carries out the reaction adenosine(1518)/adenosine(1519) in 16S rRNA + 4 S-adenosyl-L-methionine = N(6)-dimethyladenosine(1518)/N(6)-dimethyladenosine(1519) in 16S rRNA + 4 S-adenosyl-L-homocysteine + 4 H(+). In terms of biological role, specifically dimethylates two adjacent adenosines (A1518 and A1519) in the loop of a conserved hairpin near the 3'-end of 16S rRNA in the 30S particle. May play a critical role in biogenesis of 30S subunits. This chain is Ribosomal RNA small subunit methyltransferase A, found in Shigella flexneri.